Reading from the N-terminus, the 153-residue chain is MAAGLFGLSARLLLAAAATRGLPAARVRWESSFSRTVVAPSAVAGKRPPEPTTQWQEDPEPEDENLYEKNPDSHGYDKDPVLDVWNMRLVFFFGVSIILVLGSTFVAYLPDYRMKEWSRREAERLVKYREANGLPIMESNCFDPSKIQLPEDE.

A mitochondrion-targeting transit peptide spans 1-29 (MAAGLFGLSARLLLAAAATRGLPAARVRW). Residues 40-77 (PSAVAGKRPPEPTTQWQEDPEPEDENLYEKNPDSHGYD) form a disordered region. Residues 66-77 (LYEKNPDSHGYD) are compositionally biased toward basic and acidic residues. A helical membrane pass occupies residues 89-109 (LVFFFGVSIILVLGSTFVAYL).

The protein belongs to the complex I NDUFB11 subunit family. Complex I is composed of 45 different subunits. Interacts with BCAP31.

The protein localises to the mitochondrion inner membrane. Accessory subunit of the mitochondrial membrane respiratory chain NADH dehydrogenase (Complex I), that is believed not to be involved in catalysis. Complex I functions in the transfer of electrons from NADH to the respiratory chain. The immediate electron acceptor for the enzyme is believed to be ubiquinone. This Pan troglodytes (Chimpanzee) protein is NADH dehydrogenase [ubiquinone] 1 beta subcomplex subunit 11, mitochondrial (NDUFB11).